The chain runs to 318 residues: Pantothenate kinase (318 aa).

96–103 (GSVAVGKS) is a binding site for ATP.

Belongs to the prokaryotic pantothenate kinase family.

Its subcellular location is the cytoplasm. It carries out the reaction (R)-pantothenate + ATP = (R)-4'-phosphopantothenate + ADP + H(+). Its pathway is cofactor biosynthesis; coenzyme A biosynthesis; CoA from (R)-pantothenate: step 1/5. The polypeptide is Pantothenate kinase (Afipia carboxidovorans (strain ATCC 49405 / DSM 1227 / KCTC 32145 / OM5) (Oligotropha carboxidovorans)).